Reading from the N-terminus, the 200-residue chain is Protein DMP7 (200 aa).

Helical transmembrane passes span 37 to 57, 69 to 89, 129 to 149, and 167 to 187; these read LSNL…PVLT, WLTC…SFTD, ILDF…SMFD, and ILTS…LAFP.

This sequence belongs to the plant DMP1 protein family. In terms of tissue distribution, expressed in leaves, stems, flowers, siliques and roots, especially in the vasculature.

It localises to the endoplasmic reticulum membrane. Involved in membrane remodeling. The protein is Protein DMP7 of Arabidopsis thaliana (Mouse-ear cress).